A 487-amino-acid chain; its full sequence is Malonate-semialdehyde dehydrogenase 2 (487 aa).

Positions 154, 178, 181, 182, and 231 each coordinate NAD(+). Cys-286 functions as the Nucleophile in the catalytic mechanism. Glu-386 lines the NAD(+) pocket.

Belongs to the aldehyde dehydrogenase family. IolA subfamily. As to quaternary structure, homotetramer.

It catalyses the reaction 3-oxopropanoate + NAD(+) + CoA + H2O = hydrogencarbonate + acetyl-CoA + NADH + H(+). It carries out the reaction 2-methyl-3-oxopropanoate + NAD(+) + CoA + H2O = propanoyl-CoA + hydrogencarbonate + NADH + H(+). It functions in the pathway polyol metabolism; myo-inositol degradation into acetyl-CoA; acetyl-CoA from myo-inositol: step 7/7. Functionally, catalyzes the oxidation of malonate semialdehyde (MSA) and methylmalonate semialdehyde (MMSA) into acetyl-CoA and propanoyl-CoA, respectively. Is involved in a myo-inositol catabolic pathway. Bicarbonate, and not CO2, is the end-product of the enzymatic reaction. This Bacillus thuringiensis (strain Al Hakam) protein is Malonate-semialdehyde dehydrogenase 2.